We begin with the raw amino-acid sequence, 429 residues long: Tyrosine-protein kinase STYK1 (429 aa).

Residues 30-50 (VIIVPALLVGGFLILLAIILW) form a helical membrane-spanning segment. A disordered region spans residues 58-83 (SQRQSPGPRGTASVPASRGRSQEAAG). One can recognise a Protein kinase domain in the interval 119–390 (LEVLEQIHSG…GQLLQRLEAA (272 aa)). ATP is bound by residues 125–133 (IHSGSCGTL) and Lys152. The active-site Proton acceptor is Asp256.

This sequence belongs to the protein kinase superfamily. Tyr protein kinase family. Highly expressed in colon and small intestine. Weakly or not expressed in spleen, skeletal muscle, liver, kidney, heart and brain. Expressed in transformed kidney cell lines (COS-1 and HEK293T).

The protein resides in the membrane. It carries out the reaction L-tyrosyl-[protein] + ATP = O-phospho-L-tyrosyl-[protein] + ADP + H(+). Probable tyrosine protein-kinase, which has strong transforming capabilities on a variety of cell lines including NIH 3T3 fibroblasts and on athymic nude mice. When overexpressed, it can also induce tumor cell invasion as well as metastasis in distant organs. May act by activating both MAP kinase and phosphatidylinositol 3'-kinases (PI3K) pathways. This is Tyrosine-protein kinase STYK1 (Styk1) from Mus musculus (Mouse).